We begin with the raw amino-acid sequence, 216 residues long: Somatotropin (216 aa).

The first 26 residues, methionine 1–alanine 26, serve as a signal peptide directing secretion. Histidine 45 serves as a coordination point for Zn(2+). An intrachain disulfide couples cysteine 78 to cysteine 189. Serine 131 carries the phosphoserine modification. Position 198 (glutamate 198) interacts with Zn(2+). The cysteines at positions 206 and 214 are disulfide-linked.

It belongs to the somatotropin/prolactin family.

It localises to the secreted. Its function is as follows. Plays an important role in growth control. Its major role in stimulating body growth is to stimulate the liver and other tissues to secrete IGF1. It stimulates both the differentiation and proliferation of myoblasts. It also stimulates amino acid uptake and protein synthesis in muscle and other tissues. This Mus musculus (Mouse) protein is Somatotropin (Gh1).